The following is a 128-amino-acid chain: Small ribosomal subunit protein uS11 (128 aa).

The protein belongs to the universal ribosomal protein uS11 family. In terms of assembly, part of the 30S ribosomal subunit. Interacts with proteins S7 and S18. Binds to IF-3.

Located on the platform of the 30S subunit, it bridges several disparate RNA helices of the 16S rRNA. Forms part of the Shine-Dalgarno cleft in the 70S ribosome. This Porphyromonas gingivalis (strain ATCC BAA-308 / W83) protein is Small ribosomal subunit protein uS11.